A 516-amino-acid chain; its full sequence is Putative fatty acyl-CoA reductase CG8306 (516 aa).

The next 3 membrane-spanning stretches (helical) occupy residues 356–376 (WVFR…LDLV), 471–491 (ILLG…FKLI), and 496–516 (GIST…FGLL).

Belongs to the fatty acyl-CoA reductase family.

Its subcellular location is the membrane. It catalyses the reaction a long-chain fatty acyl-CoA + 2 NADPH + 2 H(+) = a long-chain primary fatty alcohol + 2 NADP(+) + CoA. Functionally, catalyzes the reduction of C16 or C18 fatty acyl-CoA to fatty alcohols. The chain is Putative fatty acyl-CoA reductase CG8306 from Drosophila melanogaster (Fruit fly).